Consider the following 639-residue polypeptide: Protein zwilch homolog (639 aa).

Over residues 76 to 95 the composition is skewed to basic and acidic residues; it reads QKTSSLLNRRENKKTIKSEK. The interval 76-116 is disordered; that stretch reads QKTSSLLNRRENKKTIKSEKEDESMDMETAEGDKENTVSET. A compositionally biased stretch (acidic residues) spans 96–105; sequence EDESMDMETA.

The protein belongs to the ZWILCH family. As to quaternary structure, component of the RZZ complex composed of rod-1, czw-1 and zwl-1. Interacts with the spindly-like protein spdl-1. Interacts with NDC80 complex component ndc-80.

The protein resides in the cytoplasm. It is found in the cell cortex. The protein localises to the chromosome. It localises to the centromere. Its subcellular location is the kinetochore. The protein resides in the cytoskeleton. It is found in the spindle. In terms of biological role, essential component of the mitotic checkpoint, which prevents cells from prematurely exiting mitosis. Required for chromosome segregation, the assembly of the dynein-dynactin and mdf-1-mdf-2 complexes onto kinetochores and spindle pole separation. Its function related to the spindle assembly machinery and kinetochore-microtubule attachments likely depends on its association in the mitotic RZZ complex. The RZZ complex recruits the spindly-like protein spdl-1 to kinetochores. To prevent irregular chromosome segregation, the complex also inhibits the attachment of the kinetochore-associated NDC80 complex to microtubules. The recruitment of spdl-1 to kinetochores relieves this inhibition. Required for embryonic development. This Caenorhabditis briggsae protein is Protein zwilch homolog (zwl-1).